Reading from the N-terminus, the 387-residue chain is Na(+)/H(+) antiporter NhaA (387 aa).

12 helical membrane passes run 16–36 (AGGV…NSSI), 53–73 (IEHY…GLEL), 89–109 (LLPI…HMFF), 118–138 (GSGI…SLLG), 147–167 (VFLT…IAIF), 171–191 (GIDV…FILN), 197–217 (ILWP…HSGV), 220–240 (TITG…PDSI), 251–271 (PVAF…IIDS), 283–303 (IGIF…FCAI), 321–341 (VIGV…ITLL), and 354–374 (IAIM…LKMT).

Belongs to the NhaA Na(+)/H(+) (TC 2.A.33) antiporter family.

The protein localises to the cell inner membrane. It carries out the reaction Na(+)(in) + 2 H(+)(out) = Na(+)(out) + 2 H(+)(in). Its function is as follows. Na(+)/H(+) antiporter that extrudes sodium in exchange for external protons. The chain is Na(+)/H(+) antiporter NhaA from Cytophaga hutchinsonii (strain ATCC 33406 / DSM 1761 / CIP 103989 / NBRC 15051 / NCIMB 9469 / D465).